A 141-amino-acid chain; its full sequence is Small ribosomal subunit protein uS12 (141 aa).

The protein belongs to the universal ribosomal protein uS12 family. As to quaternary structure, part of the 30S ribosomal subunit.

Functionally, with S4 and S5 plays an important role in translational accuracy. Located at the interface of the 30S and 50S subunits. This is Small ribosomal subunit protein uS12 from Methanobrevibacter smithii (strain ATCC 35061 / DSM 861 / OCM 144 / PS).